Reading from the N-terminus, the 433-residue chain is Gamma-glutamyl phosphate reductase 1 (433 aa).

It belongs to the gamma-glutamyl phosphate reductase family.

It localises to the cytoplasm. The catalysed reaction is L-glutamate 5-semialdehyde + phosphate + NADP(+) = L-glutamyl 5-phosphate + NADPH + H(+). Its pathway is amino-acid biosynthesis; L-proline biosynthesis; L-glutamate 5-semialdehyde from L-glutamate: step 2/2. In terms of biological role, catalyzes the NADPH-dependent reduction of L-glutamate 5-phosphate into L-glutamate 5-semialdehyde and phosphate. The product spontaneously undergoes cyclization to form 1-pyrroline-5-carboxylate. This is Gamma-glutamyl phosphate reductase 1 from Synechocystis sp. (strain ATCC 27184 / PCC 6803 / Kazusa).